Consider the following 1063-residue polypeptide: TBC1 domain family member 31 (1063 aa).

7 WD repeats span residues histidine 33–asparagine 74, arginine 75–lysine 116, glutamate 117–phenylalanine 157, glutamine 158–leucine 200, valine 201–leucine 248, phenylalanine 249–cysteine 296, and lysine 297–serine 334. The Rab-GAP TBC domain occupies glutamate 424–histidine 599. Residues glutamate 699–glutamate 951 are a coiled coil. Residues glutamine 1050–asparagine 1053 form a mediates direct interaction with PJA2 region.

Interacts with PJA2; the interaction is direct and recruits PJA2 to centrosomes. Interacts with OFD1; regulates its activity in cilium assembly. Interacts with PRKACA.

The protein localises to the cytoplasm. Its subcellular location is the cytoskeleton. It localises to the microtubule organizing center. It is found in the centrosome. The protein resides in the centriolar satellite. The protein localises to the cilium basal body. Its function is as follows. Molecular adapter which is involved in cilium biogenesis. Part of a functional complex including OFD1 a centriolar protein involved in cilium assembly. Could regulate the cAMP-dependent phosphorylation of OFD1, and its subsequent ubiquitination by PJA2 which ultimately leads to its proteasomal degradation. The polypeptide is TBC1 domain family member 31 (Bos taurus (Bovine)).